Reading from the N-terminus, the 336-residue chain is Succinylglutamate desuccinylase (336 aa).

Zn(2+) is bound by residues His-59, Glu-62, and His-151. The active site involves Glu-215.

Belongs to the AspA/AstE family. Succinylglutamate desuccinylase subfamily. The cofactor is Zn(2+).

It carries out the reaction N-succinyl-L-glutamate + H2O = L-glutamate + succinate. The protein operates within amino-acid degradation; L-arginine degradation via AST pathway; L-glutamate and succinate from L-arginine: step 5/5. Transforms N(2)-succinylglutamate into succinate and glutamate. The chain is Succinylglutamate desuccinylase from Pseudomonas fluorescens (strain ATCC BAA-477 / NRRL B-23932 / Pf-5).